A 145-amino-acid polypeptide reads, in one-letter code: Probable inactive ribonuclease-like protein 12 (145 aa).

Residues M1–T19 form the signal peptide. N-linked (GlcNAc...) asparagine glycosylation occurs at N88.

It belongs to the pancreatic ribonuclease family.

The protein resides in the secreted. In terms of biological role, does not exhibit any ribonuclease activity. This is Probable inactive ribonuclease-like protein 12 (Rnase12) from Rattus norvegicus (Rat).